The sequence spans 633 residues: Peptidoglycan D,D-transpeptidase MrdA (633 aa).

A helical transmembrane segment spans residues 22–42; sequence LVAFLGILLLTGVLIANLYNL. Residue Ser-330 is the Acyl-ester intermediate of the active site.

It belongs to the transpeptidase family. MrdA subfamily.

The protein localises to the cell inner membrane. The catalysed reaction is Preferential cleavage: (Ac)2-L-Lys-D-Ala-|-D-Ala. Also transpeptidation of peptidyl-alanyl moieties that are N-acyl substituents of D-alanine.. Its pathway is cell wall biogenesis; peptidoglycan biosynthesis. Functionally, catalyzes cross-linking of the peptidoglycan cell wall. This Escherichia coli O157:H7 protein is Peptidoglycan D,D-transpeptidase MrdA.